The chain runs to 144 residues: Phospholipase A2, membrane associated (144 aa).

An N-terminal signal peptide occupies residues 1–20; it reads MKTLLLLAVIMIFGLLQAHG. 7 cysteine pairs are disulfide-bonded: Cys46/Cys137, Cys48/Cys64, Cys63/Cys117, Cys69/Cys144, Cys70/Cys110, Cys79/Cys103, and Cys97/Cys108. The Ca(2+) site is built by His47, Gly49, and Gly51. Residue His67 is part of the active site. Residue Asp68 coordinates Ca(2+). Residue Asp111 is part of the active site.

This sequence belongs to the phospholipase A2 family. The cofactor is Ca(2+). Expressed in various tissues including heart, kidney, liver, lung, pancreas, placenta, skeletal muscle, prostate, ovary, colon and small intestine. Not detected in lymphoid organs and brain. Expressed in platelets (at protein level).

Its subcellular location is the secreted. The protein resides in the cell membrane. It localises to the mitochondrion outer membrane. It carries out the reaction a 1,2-diacyl-sn-glycero-3-phosphoethanolamine + H2O = a 1-acyl-sn-glycero-3-phosphoethanolamine + a fatty acid + H(+). It catalyses the reaction 1-hexadecanoyl-2-(9Z-octadecenoyl)-sn-glycero-3-phosphoethanolamine + H2O = 1-hexadecanoyl-sn-glycero-3-phosphoethanolamine + (9Z)-octadecenoate + H(+). The enzyme catalyses 1-hexadecanoyl-2-(9Z,12Z-octadecadienoyl)-sn-glycero-3-phosphoethanolamine + H2O = 1-hexadecanoyl-sn-glycero-3-phosphoethanolamine + (9Z,12Z)-octadecadienoate + H(+). The catalysed reaction is 1-hexadecanoyl-2-(5Z,8Z,11Z,14Z-eicosatetraenoyl)-sn-glycero-3-phosphoethanolamine + H2O = 1-hexadecanoyl-sn-glycero-3-phosphoethanolamine + (5Z,8Z,11Z,14Z)-eicosatetraenoate + H(+). It carries out the reaction N-hexadecanoyl-1,2-di-(9Z-octadecenoyl)-sn-glycero-3-phosphoethanolamine + H2O = N-hexadecanoyl-1-(9Z-octadecenoyl)-sn-glycero-3-phosphoethanolamine + (9Z)-octadecenoate + H(+). It catalyses the reaction 1,2-dihexadecanoyl-sn-glycero-3-phospho-(1'-sn-glycerol) + H2O = 1-hexadecanoyl-sn-glycero-3-phospho-(1'-sn-glycerol) + hexadecanoate + H(+). The enzyme catalyses 1-hexadecanoyl-2-(9Z-octadecenoyl)-sn-glycero-3-phosphoglycerol + H2O = 1-hexadecanoyl-sn-glycero-3-phosphoglycerol + (9Z)-octadecenoate + H(+). The catalysed reaction is 1-hexadecanoyl-2-(9Z-octadecenoyl)-sn-glycero-3-phospho-(1'-sn-glycerol) + H2O = 1-hexadecanoyl-sn-glycero-3-phospho-(1'-sn-glycerol) + (9Z)-octadecenoate + H(+). It carries out the reaction a 1,2-diacyl-sn-glycero-3-phosphocholine + H2O = a 1-acyl-sn-glycero-3-phosphocholine + a fatty acid + H(+). It catalyses the reaction 1,2-dihexadecanoyl-sn-glycero-3-phosphocholine + H2O = 1-hexadecanoyl-sn-glycero-3-phosphocholine + hexadecanoate + H(+). The enzyme catalyses 1-hexadecanoyl-2-(9Z-octadecenoyl)-sn-glycero-3-phosphocholine + H2O = 1-hexadecanoyl-sn-glycero-3-phosphocholine + (9Z)-octadecenoate + H(+). The catalysed reaction is 1-hexadecanoyl-2-(9Z,12Z-octadecadienoyl)-sn-glycero-3-phosphocholine + H2O = (9Z,12Z)-octadecadienoate + 1-hexadecanoyl-sn-glycero-3-phosphocholine + H(+). It carries out the reaction 1-hexadecanoyl-2-(4Z,7Z,10Z,13Z,16Z,19Z-docosahexaenoyl)-sn-glycero-3-phosphocholine + H2O = (4Z,7Z,10Z,13Z,16Z,19Z)-docosahexaenoate + 1-hexadecanoyl-sn-glycero-3-phosphocholine + H(+). Its function is as follows. Secretory calcium-dependent phospholipase A2 that primarily targets extracellular phospholipids with implications in host antimicrobial defense, inflammatory response and tissue regeneration. Hydrolyzes the ester bond of the fatty acyl group attached at sn-2 position of phospholipids (phospholipase A2 activity) with preference for phosphatidylethanolamines and phosphatidylglycerols over phosphatidylcholines. Contributes to lipid remodeling of cellular membranes and generation of lipid mediators involved in pathogen clearance. Displays bactericidal activity against Gram-positive bacteria by directly hydrolyzing phospholipids of the bacterial membrane. Upon sterile inflammation, targets membrane phospholipids of extracellular mitochondria released from activated platelets, generating free unsaturated fatty acids such as arachidonate that is used by neighboring leukocytes to synthesize inflammatory eicosanoids such as leukotrienes. Simultaneously, by compromising mitochondrial membrane integrity, promotes the release in circulation of potent damage-associated molecular pattern molecules that activate the innate immune response. Plays a stem cell regulator role in the intestinal crypt. Within intracellular compartment mediates Paneth cell differentiation and its stem cell supporting functions by inhibiting Wnt signaling pathway in intestinal stem cell (ICS). Secreted in the intestinal lumen upon inflammation, acts in an autocrine way and promotes prostaglandin E2 synthesis that stimulates Wnt signaling pathway in ICS cells and tissue regeneration. May play a role in the biosynthesis of N-acyl ethanolamines that regulate energy metabolism and inflammation. Hydrolyzes N-acyl phosphatidylethanolamines to N-acyl lysophosphatidylethanolamines, which are further cleaved by a lysophospholipase D to release N-acyl ethanolamines. Independent of its catalytic activity, acts as a ligand for integrins. Binds to and activates integrins ITGAV:ITGB3, ITGA4:ITGB1 and ITGA5:ITGB1. Binds to a site (site 2) which is distinct from the classical ligand-binding site (site 1) and induces integrin conformational changes and enhanced ligand binding to site 1. Induces cell proliferation in an integrin-dependent manner. The chain is Phospholipase A2, membrane associated (PLA2G2A) from Homo sapiens (Human).